Consider the following 125-residue polypeptide: MADLAKIEEQLSSLTLMQAAELVKILEAKWGVSAVTPIAVASAGVADPVAEAVAEKTEFEVVLTATGDKKVEVIKIIKDITGLGLIEAKKLVDEAPKPIKSNLKKAEAEEIKNKLEATGAKVELK.

It belongs to the bacterial ribosomal protein bL12 family. As to quaternary structure, homodimer. Part of the ribosomal stalk of the 50S ribosomal subunit. Forms a multimeric L10(L12)X complex, where L10 forms an elongated spine to which 2 to 4 L12 dimers bind in a sequential fashion. Binds GTP-bound translation factors.

Forms part of the ribosomal stalk which helps the ribosome interact with GTP-bound translation factors. Is thus essential for accurate translation. The chain is Large ribosomal subunit protein bL12 from Rickettsia typhi (strain ATCC VR-144 / Wilmington).